The primary structure comprises 434 residues: Enolase 2 (434 aa).

Gln-171 contributes to the (2R)-2-phosphoglycerate binding site. Residue Glu-213 is the Proton donor of the active site. Residues Asp-250, Glu-293, and Asp-320 each coordinate Mg(2+). Residues Lys-345, Arg-374, Ser-375, and Lys-396 each coordinate (2R)-2-phosphoglycerate. Lys-345 (proton acceptor) is an active-site residue.

Belongs to the enolase family. The cofactor is Mg(2+).

Its subcellular location is the cytoplasm. It is found in the secreted. The protein localises to the cell surface. The enzyme catalyses (2R)-2-phosphoglycerate = phosphoenolpyruvate + H2O. It functions in the pathway carbohydrate degradation; glycolysis; pyruvate from D-glyceraldehyde 3-phosphate: step 4/5. Its function is as follows. Catalyzes the reversible conversion of 2-phosphoglycerate (2-PG) into phosphoenolpyruvate (PEP). It is essential for the degradation of carbohydrates via glycolysis. This Streptomyces coelicolor (strain ATCC BAA-471 / A3(2) / M145) protein is Enolase 2.